A 409-amino-acid polypeptide reads, in one-letter code: Endoglucanase B (409 aa).

Substrate is bound by residues His61, 65-66 (WY), Tyr92, and His127. Residue Glu165 is the Proton donor of the active site. A substrate-binding site is contributed by Tyr228. The Nucleophile role is filled by Glu254. Substrate contacts are provided by residues 260–261 (AT), Trp288, and 293–295 (KDE). The disordered stretch occupies residues 326 to 372 (IRESATTPPSDPTPPSDPDPGEPEPDPGEPDPTPPSDPGDYPAWDPN). The span at 334–343 (PSDPTPPSDP) shows a compositional bias: pro residues. Acidic residues predominate over residues 344-354 (DPGEPEPDPGE).

Belongs to the glycosyl hydrolase 5 (cellulase A) family.

It carries out the reaction Endohydrolysis of (1-&gt;4)-beta-D-glucosidic linkages in cellulose, lichenin and cereal beta-D-glucans.. This is Endoglucanase B (celB) from Evansella cellulosilytica (strain ATCC 21833 / DSM 2522 / FERM P-1141 / JCM 9156 / N-4) (Bacillus cellulosilyticus).